Consider the following 431-residue polypeptide: Histidinol dehydrogenase (431 aa).

Positions 127, 189, and 212 each coordinate NAD(+). The substrate site is built by Ser237, Gln259, and His262. Residues Gln259 and His262 each contribute to the Zn(2+) site. Residues Glu326 and His327 each act as proton acceptor in the active site. Residues His327, Asp360, Glu414, and His419 each contribute to the substrate site. Residue Asp360 participates in Zn(2+) binding. His419 serves as a coordination point for Zn(2+).

This sequence belongs to the histidinol dehydrogenase family. Zn(2+) serves as cofactor.

The enzyme catalyses L-histidinol + 2 NAD(+) + H2O = L-histidine + 2 NADH + 3 H(+). Its pathway is amino-acid biosynthesis; L-histidine biosynthesis; L-histidine from 5-phospho-alpha-D-ribose 1-diphosphate: step 9/9. In terms of biological role, catalyzes the sequential NAD-dependent oxidations of L-histidinol to L-histidinaldehyde and then to L-histidine. In Xanthomonas campestris pv. campestris (strain 8004), this protein is Histidinol dehydrogenase.